The following is a 559-amino-acid chain: Glycerol kinase (559 aa).

ADP is bound at residue Thr-20. ATP-binding residues include Thr-20, Ser-21, and Ser-22. Thr-20 is a sn-glycerol 3-phosphate binding site. Arg-24 serves as a coordination point for ADP. Residues Arg-94, Glu-95, and Tyr-148 each contribute to the sn-glycerol 3-phosphate site. The glycerol site is built by Arg-94, Glu-95, and Tyr-148. Gly-252 lines the beta-D-fructose 1,6-bisphosphate pocket. Asp-265 serves as a coordination point for sn-glycerol 3-phosphate. Residues Asp-265 and Gln-266 each coordinate glycerol. Positions 287, 332, 433, and 437 each coordinate ADP. Residues Thr-287, Gly-332, and Gly-433 each coordinate ATP. Zn(2+) is bound at residue Glu-501. A helical transmembrane segment spans residues 532 to 552 (IFCSLPLGFFIVSSVVMLIGA).

This sequence belongs to the FGGY kinase family.

The protein localises to the mitochondrion outer membrane. Its subcellular location is the nucleus. It localises to the cytoplasm. It is found in the cytosol. The enzyme catalyses glycerol + ATP = sn-glycerol 3-phosphate + ADP + H(+). The protein operates within polyol metabolism; glycerol degradation via glycerol kinase pathway; sn-glycerol 3-phosphate from glycerol: step 1/1. Functionally, kinase that plays a key role in glycerol metabolism, catalyzing its phosphorylation to produce sn-glycerol 3-phosphate. Sn-glycerol 3-phosphate is a crucial intermediate in various metabolic pathways, such as the synthesis of glycerolipids and triglycerides, glycogenesis, glycolysis and gluconeogenesis. In Bos taurus (Bovine), this protein is Glycerol kinase.